A 91-amino-acid polypeptide reads, in one-letter code: Potassium channel toxin TstKMK (91 aa).

Residues 1–25 form the signal peptide; sequence MVATNRCCVFALLFALLLVHSLTEA. A propeptide spanning residues 26-42 is cleaved from the precursor; it reads GKGKEILGKIKEKIIEA. Residues 58-91 form the BetaSPN-type CS-alpha/beta domain; that stretch reads EYACPAIDKFCEDHCAAKKAVGKCDDFKCKCIKL. 3 disulfides stabilise this stretch: Cys61/Cys81, Cys68/Cys86, and Cys72/Cys88.

It belongs to the long chain scorpion toxin family. Class 2 subfamily. As to expression, expressed by the venom gland.

The protein resides in the secreted. Functionally, the full peptide presents antibacterial and cytotoxic activities. The synthetic C-terminus (AA 33-76) inhibits voltage-gated potassium channels Kv1.1/KCNA1, Kv1.2/KCNA2, and Kv1.3/KCNA3. The sequence is that of Potassium channel toxin TstKMK from Tityus stigmurus (Brazilian scorpion).